The primary structure comprises 628 residues: ATP-dependent zinc metalloprotease FtsH (628 aa).

Topologically, residues 1 to 7 are stromal; it reads MKLSWKT. Residues 8 to 28 traverse the membrane as a helical segment; sequence LLLWSLPIFVIGFFFWQGFLG. Residues 29–118 are Lumenal-facing; that stretch reads PTTTDVGSNI…AHPPKSTSAV (90 aa). The chain crosses the membrane as a helical span at residues 119–139; that stretch reads WGLLGNLLFPLLLVGGLAFLF. Residues 140-628 are Stromal-facing; that stretch reads RRSNNASGGP…PEKNYYISQF (489 aa). 213–220 is a binding site for ATP; the sequence is GPPGTGKT. His-434 contacts Zn(2+). Glu-435 is a catalytic residue. Residues His-438 and Asp-512 each contribute to the Zn(2+) site.

The protein in the central section; belongs to the AAA ATPase family. This sequence in the C-terminal section; belongs to the peptidase M41 family. Homohexamer. It depends on Zn(2+) as a cofactor.

It localises to the plastid. It is found in the chloroplast thylakoid membrane. Acts as a processive, ATP-dependent zinc metallopeptidase. The polypeptide is ATP-dependent zinc metalloprotease FtsH (Pyropia yezoensis (Susabi-nori)).